Reading from the N-terminus, the 148-residue chain is Nucleoside diphosphate kinase (148 aa).

Residues lysine 10, phenylalanine 58, arginine 86, threonine 92, arginine 103, and asparagine 113 each coordinate ATP. Histidine 116 acts as the Pros-phosphohistidine intermediate in catalysis.

The protein belongs to the NDK family. Requires Mg(2+) as cofactor.

The protein localises to the cytoplasm. It catalyses the reaction a 2'-deoxyribonucleoside 5'-diphosphate + ATP = a 2'-deoxyribonucleoside 5'-triphosphate + ADP. It carries out the reaction a ribonucleoside 5'-diphosphate + ATP = a ribonucleoside 5'-triphosphate + ADP. Major role in the synthesis of nucleoside triphosphates other than ATP. The ATP gamma phosphate is transferred to the NDP beta phosphate via a ping-pong mechanism, using a phosphorylated active-site intermediate. In Thermoplasma acidophilum (strain ATCC 25905 / DSM 1728 / JCM 9062 / NBRC 15155 / AMRC-C165), this protein is Nucleoside diphosphate kinase.